Here is a 195-residue protein sequence, read N- to C-terminus: Putative deoxynucleoside kinase (195 aa).

This Frog virus 3 (isolate Goorha) (FV-3) protein is Putative deoxynucleoside kinase.